A 391-amino-acid polypeptide reads, in one-letter code: 5-amino-6-(D-ribitylamino)uracil--L-tyrosine 4-hydroxyphenyl transferase (391 aa).

Residues V55–N302 enclose the Radical SAM core domain. C69, C73, and C76 together coordinate [4Fe-4S] cluster.

This sequence belongs to the radical SAM superfamily. CofH family. As to quaternary structure, consists of two subunits, CofG and CofH. It depends on [4Fe-4S] cluster as a cofactor.

It catalyses the reaction 5-amino-6-(D-ribitylamino)uracil + L-tyrosine + S-adenosyl-L-methionine = 5-amino-5-(4-hydroxybenzyl)-6-(D-ribitylimino)-5,6-dihydrouracil + 2-iminoacetate + 5'-deoxyadenosine + L-methionine + H(+). It participates in cofactor biosynthesis; coenzyme F0 biosynthesis. Functionally, catalyzes the radical-mediated synthesis of 5-amino-5-(4-hydroxybenzyl)-6-(D-ribitylimino)-5,6-dihydrouracil from 5-amino-6-(D-ribitylamino)uracil and L-tyrosine. This Nostoc sp. (strain PCC 7120 / SAG 25.82 / UTEX 2576) protein is 5-amino-6-(D-ribitylamino)uracil--L-tyrosine 4-hydroxyphenyl transferase.